We begin with the raw amino-acid sequence, 178 residues long: Disulfide bond formation protein B (178 aa).

The Cytoplasmic segment spans residues Met-1–Gly-14. Residues Trp-15 to Tyr-31 traverse the membrane as a helical segment. The Periplasmic portion of the chain corresponds to Phe-32–Val-49. The cysteines at positions 41 and 44 are disulfide-linked. Residues Ala-50 to Pro-65 form a helical membrane-spanning segment. At Ser-66 to Phe-72 the chain is on the cytoplasmic side. Residues Leu-73–Leu-90 form a helical membrane-spanning segment. Over Lys-91 to Gln-145 the chain is Periplasmic. An intrachain disulfide couples Cys-105 to Cys-131. The chain crosses the membrane as a helical span at residues Trp-146–Ser-164. Residues Gln-165 to Arg-178 are Cytoplasmic-facing.

Belongs to the DsbB family.

It is found in the cell inner membrane. Required for disulfide bond formation in some periplasmic proteins. Acts by oxidizing the DsbA protein. The protein is Disulfide bond formation protein B of Mannheimia succiniciproducens (strain KCTC 0769BP / MBEL55E).